The primary structure comprises 105 residues: UPF0045 protein ECM15 (105 aa).

This sequence belongs to the UPF0045 family.

The polypeptide is UPF0045 protein ECM15 (ECM15) (Eremothecium gossypii (strain ATCC 10895 / CBS 109.51 / FGSC 9923 / NRRL Y-1056) (Yeast)).